A 318-amino-acid polypeptide reads, in one-letter code: Ubiquitin-like domain-containing CTD phosphatase 1 (318 aa).

Residues 3 to 81 enclose the Ubiquitin-like domain; sequence LPIIVKWGGQ…IMMMGTREES (79 aa). K117 is subject to N6-acetyllysine. The FCP1 homology domain maps to 133–294; that stretch reads PREGKKLLVL…VKLTQYLKEI (162 aa). Mg(2+) is bound by residues D143, D145, and D253.

It depends on Mg(2+) as a cofactor.

It is found in the nucleus. The catalysed reaction is O-phospho-L-seryl-[protein] + H2O = L-seryl-[protein] + phosphate. It catalyses the reaction O-phospho-L-threonyl-[protein] + H2O = L-threonyl-[protein] + phosphate. Functionally, dephosphorylates 26S nuclear proteasomes, thereby decreasing their proteolytic activity. Recruited to the 19S regulatory particle of the 26S proteasome through its interaction with 19S component PSMD2/RPN1. Once recruited, dephosphorylates 19S component PSMC2/RPT1 which impairs PSMC2 ATPase activity and disrupts 26S proteasome assembly. Has also been reported to stimulate the proteolytic activity of the 26S proteasome. The sequence is that of Ubiquitin-like domain-containing CTD phosphatase 1 (Ublcp1) from Rattus norvegicus (Rat).